The chain runs to 216 residues: Probable flavin-dependent thymidylate synthase (216 aa).

In terms of domain architecture, ThyX spans 1-216; sequence MSAKLISVTK…PSIAKALDWV (216 aa). FAD contacts are provided by residues S55, 78 to 80, and E86; that span reads RHR. DUMP contacts are provided by residues 75 to 78, 86 to 90, and R155; these read QVLR and EFSQR. The short motif at 78–88 is the ThyX motif element; sequence RHRSFHFQEFS. H177 is an FAD binding site. Position 182 (R182) interacts with dUMP. Residue R182 is the Involved in ionization of N3 of dUMP, leading to its activation of the active site.

This sequence belongs to the thymidylate synthase ThyX family. As to quaternary structure, homotetramer. FAD serves as cofactor.

The catalysed reaction is dUMP + (6R)-5,10-methylene-5,6,7,8-tetrahydrofolate + NADPH + H(+) = dTMP + (6S)-5,6,7,8-tetrahydrofolate + NADP(+). The protein operates within pyrimidine metabolism; dTTP biosynthesis. Functionally, catalyzes the reductive methylation of 2'-deoxyuridine-5'-monophosphate (dUMP) to 2'-deoxythymidine-5'-monophosphate (dTMP) while utilizing 5,10-methylenetetrahydrofolate (mTHF) as the methyl donor, and NADPH and FADH(2) as the reductant. This Paramecium bursaria Chlorella virus 1 (PBCV-1) protein is Probable flavin-dependent thymidylate synthase.